Reading from the N-terminus, the 440-residue chain is MIPKKTKLKSREIEVPGDKSLSHRSVLFAALSKGKSKVTGFLEAEDPLNTMSAFAKLGLKVQKVKPGEYEFESPGKNKLVSPNVDLDFGNAGTGIRLSAGLICGLPGINATLTGDNSLKKRPMGRIIKPLSSMGASIVGLGEKETAPLKIEGKKLKGFRYESPIASAQVKSCLMLAAISSETDLEYSENILSRDHTENMFRFLGNKIEQISPLHFKIKPPYVLNGGEFRVPGDISSAAFFLVLGVLAKEGNLLIKNIGLNPARTGILTALQSMGAKIEIQNKRIECGETVGDLKTYPSNLKKSNIPESLIPSIIDEIPILSVAGFFAEGGFEIRHAEELRAKESDRIHTMVSNFRELGIEVEEYTDGYSFDGTSKKSSEVWTRLSTVKKIPIQSYMDHRIAMSFLIFKTLSGLDLQIDETSWIETSFPGFEKLLESCINE.

Residues lysine 19, serine 20, and arginine 24 each coordinate 3-phosphoshikimate. Lysine 19 is a phosphoenolpyruvate binding site. Residues glycine 92 and arginine 121 each coordinate phosphoenolpyruvate. Residues serine 166, glutamine 168, aspartate 315, and lysine 342 each contribute to the 3-phosphoshikimate site. Position 168 (glutamine 168) interacts with phosphoenolpyruvate. Aspartate 315 serves as the catalytic Proton acceptor. 2 residues coordinate phosphoenolpyruvate: arginine 346 and arginine 399.

This sequence belongs to the EPSP synthase family. As to quaternary structure, monomer.

It is found in the cytoplasm. The catalysed reaction is 3-phosphoshikimate + phosphoenolpyruvate = 5-O-(1-carboxyvinyl)-3-phosphoshikimate + phosphate. Its pathway is metabolic intermediate biosynthesis; chorismate biosynthesis; chorismate from D-erythrose 4-phosphate and phosphoenolpyruvate: step 6/7. Its function is as follows. Catalyzes the transfer of the enolpyruvyl moiety of phosphoenolpyruvate (PEP) to the 5-hydroxyl of shikimate-3-phosphate (S3P) to produce enolpyruvyl shikimate-3-phosphate and inorganic phosphate. In Leptospira interrogans serogroup Icterohaemorrhagiae serovar Lai (strain 56601), this protein is 3-phosphoshikimate 1-carboxyvinyltransferase.